We begin with the raw amino-acid sequence, 94 residues long: Protein SKIP34 (94 aa).

The interval 1 to 27 (MCYGHNQSLSSRSSLRRRSHDGEDDSV) is disordered. Positions 23 to 61 (EDDSVVDDLRDRLAETEARLRRARAREAELSRRLEHMKR) form a coiled coil.

Interacts with SPK1B/ASK2.

The polypeptide is Protein SKIP34 (SKIP34) (Arabidopsis thaliana (Mouse-ear cress)).